A 528-amino-acid chain; its full sequence is Sphingosine-1-phosphate lyase (528 aa).

The chain crosses the membrane as a helical span at residues 13–35 (PAKLVLATAGITAASILAYQAIT). At Lys-324 the chain carries N6-(pyridoxal phosphate)lysine.

It belongs to the group II decarboxylase family. Sphingosine-1-phosphate lyase subfamily. It depends on pyridoxal 5'-phosphate as a cofactor.

Its subcellular location is the endoplasmic reticulum membrane. The enzyme catalyses sphinganine 1-phosphate = hexadecanal + phosphoethanolamine. The protein operates within lipid metabolism; sphingolipid metabolism. Its function is as follows. Cleaves phosphorylated sphingoid bases (PSBs), such as sphingosine-1-phosphate, into fatty aldehydes and phosphoethanolamine. Sphingosine-1-phosphate (S1P) probably acts intracellularly as a second messenger perhaps by promoting cell proliferation; the absence of S1P lyase increases its concentration. This leads to increased lateral pseudopod formation as well as defects in the efficiency of chemotaxis. Overexpression of S1P lyase causes decreased growth rates, entry into stationary phase at lower cell density and increased sensitivity to the antitumor agents cisplatin and carboplatin; these effects are more pronounced in cells that express more enzyme. This chain is Sphingosine-1-phosphate lyase (sglA), found in Dictyostelium discoideum (Social amoeba).